We begin with the raw amino-acid sequence, 483 residues long: Glycogen synthase (483 aa).

Lysine 18 serves as a coordination point for ADP-alpha-D-glucose.

This sequence belongs to the glycosyltransferase 1 family. Bacterial/plant glycogen synthase subfamily.

It catalyses the reaction [(1-&gt;4)-alpha-D-glucosyl](n) + ADP-alpha-D-glucose = [(1-&gt;4)-alpha-D-glucosyl](n+1) + ADP + H(+). The protein operates within glycan biosynthesis; glycogen biosynthesis. Functionally, synthesizes alpha-1,4-glucan chains using ADP-glucose. The chain is Glycogen synthase from Rhodopseudomonas palustris (strain ATCC BAA-98 / CGA009).